A 68-amino-acid polypeptide reads, in one-letter code: Large ribosomal subunit protein bL31 (68 aa).

Zn(2+)-binding residues include Cys-16, Cys-18, Cys-37, and Cys-40.

This sequence belongs to the bacterial ribosomal protein bL31 family. Type A subfamily. In terms of assembly, part of the 50S ribosomal subunit. It depends on Zn(2+) as a cofactor.

In terms of biological role, binds the 23S rRNA. This Nitrosococcus oceani (strain ATCC 19707 / BCRC 17464 / JCM 30415 / NCIMB 11848 / C-107) protein is Large ribosomal subunit protein bL31.